A 93-amino-acid polypeptide reads, in one-letter code: Large ribosomal subunit protein uL23cz/uL23cy (93 aa).

It belongs to the universal ribosomal protein uL23 family. As to quaternary structure, part of the 50S ribosomal subunit.

The protein localises to the plastid. Its subcellular location is the chloroplast. In terms of biological role, binds to 23S rRNA. This Lotus japonicus (Lotus corniculatus var. japonicus) protein is Large ribosomal subunit protein uL23cz/uL23cy (rpl23-A).